A 204-amino-acid chain; its full sequence is Protein GrpE (204 aa).

The segment at 1 to 42 (MTDETAKNGPDAAADAQIEPQVQEETNSTAEDAGQDNNPTAA) is disordered. A compositionally biased stretch (polar residues) spans 23-41 (QEETNSTAEDAGQDNNPTA).

The protein belongs to the GrpE family. Homodimer.

It is found in the cytoplasm. Participates actively in the response to hyperosmotic and heat shock by preventing the aggregation of stress-denatured proteins, in association with DnaK and GrpE. It is the nucleotide exchange factor for DnaK and may function as a thermosensor. Unfolded proteins bind initially to DnaJ; upon interaction with the DnaJ-bound protein, DnaK hydrolyzes its bound ATP, resulting in the formation of a stable complex. GrpE releases ADP from DnaK; ATP binding to DnaK triggers the release of the substrate protein, thus completing the reaction cycle. Several rounds of ATP-dependent interactions between DnaJ, DnaK and GrpE are required for fully efficient folding. This is Protein GrpE from Allorhizobium ampelinum (strain ATCC BAA-846 / DSM 112012 / S4) (Agrobacterium vitis (strain S4)).